Here is a 181-residue protein sequence, read N- to C-terminus: Regulator of G-protein signaling 10 (181 aa).

The interval 1 to 35 is disordered; that stretch reads MFTRAVSRLSRKRPPSDIHDGDGSSSSGHQSLKST. Residues serine 24 and serine 41 each carry the phosphoserine modification. Residues 41-156 enclose the RGS domain; sequence SLENLLEDPE…LKSDLFLKPK (116 aa). Cysteine 74 carries S-palmitoyl cysteine lipidation. Positions 155-181 are disordered; the sequence is PKRTEEEEEEPPDAQTAAKRASRIYNT. At serine 176 the chain carries Phosphoserine.

As to quaternary structure, interacts with GNAZ, GNAI1 and GNAI3. Associates specifically with the activated, GTP-bound forms of GNAZ and GNAI3.

It localises to the cytoplasm. Its subcellular location is the cytosol. The protein resides in the nucleus. Its function is as follows. Regulates G protein-coupled receptor signaling cascades, including signaling downstream of the muscarinic acetylcholine receptor CHRM2. Inhibits signal transduction by increasing the GTPase activity of G protein alpha subunits, thereby driving them into their inactive GDP-bound form. Modulates the activity of potassium channels that are activated in response to CHRM2 signaling. Activity on GNAZ is inhibited by palmitoylation of the G-protein. The sequence is that of Regulator of G-protein signaling 10 (Rgs10) from Mus musculus (Mouse).